Here is a 192-residue protein sequence, read N- to C-terminus: Potassium-transporting ATPase KdpC subunit (192 aa).

The helical transmembrane segment at 14-34 threads the bilayer; it reads LTGVLVVLCGLIYPAMVTGIA.

It belongs to the KdpC family. The system is composed of three essential subunits: KdpA, KdpB and KdpC.

It localises to the cell membrane. Its function is as follows. Part of the high-affinity ATP-driven potassium transport (or Kdp) system, which catalyzes the hydrolysis of ATP coupled with the electrogenic transport of potassium into the cytoplasm. This subunit acts as a catalytic chaperone that increases the ATP-binding affinity of the ATP-hydrolyzing subunit KdpB by the formation of a transient KdpB/KdpC/ATP ternary complex. The protein is Potassium-transporting ATPase KdpC subunit of Bacillus cytotoxicus (strain DSM 22905 / CIP 110041 / 391-98 / NVH 391-98).